The sequence spans 302 residues: Actin maturation protease (302 aa).

Positions 1-26 are disordered; that stretch reads MPHTNEDPTAQQAGVILDPPPPLPPP. Positions 85-205 are peptidase C39-like; the sequence is SLIQEGPQCG…WAVISGVLFG (121 aa). Cys93 is a catalytic residue.

The protein belongs to the ACTMAP family.

It localises to the cytoplasm. The catalysed reaction is N-terminal N(alpha)-acetyl-L-methionyl-L-aspartyl-[protein] + H2O = N-terminal L-aspartyl-[protein] + N-acetyl-L-methionine. The enzyme catalyses N-terminal N(alpha)-acetyl-L-methionyl-L-glutamyl-[protein] + H2O = N-terminal L-glutamyl-[protein] + N-acetyl-L-methionine. It carries out the reaction N-terminal N(alpha)-acetyl-L-cysteinyl-L-aspartyl-[protein] + H2O = N-terminal L-aspartyl-[protein] + N-acetyl-L-cysteine. It catalyses the reaction N-terminal N(alpha)-acetyl-L-cysteinyl-L-glutamyl-[protein] + H2O = N-terminal L-glutamyl-[protein] + N-acetyl-L-cysteine. Actin maturation protease that specifically mediates the cleavage of immature acetylated N-terminal actin, thereby contributing to actin maturation. Cleaves N-terminal acetylated methionine of immature cytoplasmic beta- and gamma-actin after translation. Cleaves N-terminal acetylated cysteine of muscle alpha-actin after canonical removal of N-terminal methionine. The polypeptide is Actin maturation protease (Xenopus tropicalis (Western clawed frog)).